A 736-amino-acid chain; its full sequence is Polyribonucleotide nucleotidyltransferase (736 aa).

Positions 493 and 499 each coordinate Mg(2+). The region spanning 560–619 (PQHAELVVNPDAIRMIIGPGGKNIKQITTVTGAAIDINDSGKISIFAPTSEAMEQAKQMI) is the KH domain. The region spanning 629-703 (GKNYKGKVRK…SRKAVLLEEE (75 aa)) is the S1 motif domain. The segment at 710–736 (EESSRFSKGNRNGDRSRHNNRERTRRT) is disordered. Residues 720-736 (RNGDRSRHNNRERTRRT) are compositionally biased toward basic and acidic residues.

Belongs to the polyribonucleotide nucleotidyltransferase family. Mg(2+) is required as a cofactor.

Its subcellular location is the cytoplasm. It carries out the reaction RNA(n+1) + phosphate = RNA(n) + a ribonucleoside 5'-diphosphate. Its function is as follows. Involved in mRNA degradation. Catalyzes the phosphorolysis of single-stranded polyribonucleotides processively in the 3'- to 5'-direction. The polypeptide is Polyribonucleotide nucleotidyltransferase (Lawsonia intracellularis (strain PHE/MN1-00)).